Reading from the N-terminus, the 245-residue chain is Large ribosomal subunit protein uL2 (245 aa).

Residues 196–226 form a disordered region; that stretch reads SPYAHPHGGGSHQKGGTPVSKTAPPGQKVGF.

It belongs to the universal ribosomal protein uL2 family. In terms of assembly, part of the 50S ribosomal subunit. Forms a bridge to the 30S subunit in the 70S ribosome.

In terms of biological role, one of the primary rRNA binding proteins. Required for association of the 30S and 50S subunits to form the 70S ribosome, for tRNA binding and peptide bond formation. It has been suggested to have peptidyltransferase activity; this is somewhat controversial. Makes several contacts with the 16S rRNA in the 70S ribosome. The protein is Large ribosomal subunit protein uL2 of Pyrobaculum neutrophilum (strain DSM 2338 / JCM 9278 / NBRC 100436 / V24Sta) (Thermoproteus neutrophilus).